A 266-amino-acid chain; its full sequence is Small ribosomal subunit protein uS3m (266 aa).

The protein belongs to the universal ribosomal protein uS3 family.

Its subcellular location is the mitochondrion. The chain is Small ribosomal subunit protein uS3m (MRPS3) from Mycosarcoma maydis (Corn smut fungus).